The sequence spans 423 residues: Protein CLP1 homolog (423 aa).

Residues E19, K60, and D122 to T127 each bind ATP.

The protein belongs to the Clp1 family. Clp1 subfamily.

The protein localises to the nucleus. Its function is as follows. Required for endonucleolytic cleavage during polyadenylation-dependent pre-mRNA 3'-end formation. This is Protein CLP1 homolog (cbc) from Culex quinquefasciatus (Southern house mosquito).